A 421-amino-acid chain; its full sequence is Inner membrane protein YihN (421 aa).

Residues 1–44 (MLTKKKWALFSLLTLCGGTIYKLPSLKDAFYIPMQEYFHLTNGQ) are Periplasmic-facing. Residues 45-65 (IGNAMSVNSFVTTVGFFLSIY) traverse the membrane as a helical segment. Over 66 to 73 (FADKLPRR) the chain is Cytoplasmic. Residues 74–91 (YTMSFSLIATGLLGVYLT) traverse the membrane as a helical segment. The Periplasmic portion of the chain corresponds to 92-95 (TMPG). The chain crosses the membrane as a helical span at residues 96 to 118 (YWGILFVWALFGVTCDMMNWPVL). The Cytoplasmic portion of the chain corresponds to 119–146 (LKSVSRLGNSEQQGRLFGFFETGRGIVD). A helical membrane pass occupies residues 147-167 (TVVAFSALAVFTWFGSGLLGF). Position 168 (Lys168) is a topological domain, periplasmic. The helical transmembrane segment at 169–189 (AGIWFYSLIVIAVGIIIFFVL) threads the bilayer. At 190–220 (NDKEEAPSVEVKKEDGASKNTSMTSVLKDKT) the chain is on the cytoplasmic side. Helical transmembrane passes span 221–241 (IWLI…LTFF) and 242–262 (IPFL…YGII). Residues 263 to 288 (NQYCLKMIGGPIGGMISDKILKSPSK) are Cytoplasmic-facing. The next 2 helical transmembrane spans lie at 289–309 (YLCY…MLPH) and 310–330 (ESMP…IVFT). At 331–354 (QRAVFFAPIGEAKIAENKTGAAMA) the chain is on the cytoplasmic side. The chain crosses the membrane as a helical span at residues 355 to 375 (LGSFIGYAPAMFCFSLYGYIL). Residues 376-385 (DLNPGIIGYK) are Periplasmic-facing. The chain crosses the membrane as a helical span at residues 386-406 (IVFGIMACFAFSGAVVSVMLV). Residues 407–421 (KRISQRKKEMLAAEA) are Cytoplasmic-facing.

The protein belongs to the major facilitator superfamily.

It localises to the cell inner membrane. The protein is Inner membrane protein YihN (yihN) of Escherichia coli (strain K12).